Reading from the N-terminus, the 425-residue chain is Enolase (425 aa).

Residue Q164 participates in (2R)-2-phosphoglycerate binding. E208 acts as the Proton donor in catalysis. D243, E286, and D312 together coordinate Mg(2+). (2R)-2-phosphoglycerate-binding residues include K337, R366, S367, and K388. K337 functions as the Proton acceptor in the catalytic mechanism.

Belongs to the enolase family. The cofactor is Mg(2+).

The protein resides in the cytoplasm. Its subcellular location is the secreted. It localises to the cell surface. It carries out the reaction (2R)-2-phosphoglycerate = phosphoenolpyruvate + H2O. It participates in carbohydrate degradation; glycolysis; pyruvate from D-glyceraldehyde 3-phosphate: step 4/5. Its function is as follows. Catalyzes the reversible conversion of 2-phosphoglycerate (2-PG) into phosphoenolpyruvate (PEP). It is essential for the degradation of carbohydrates via glycolysis. This Methanococcus aeolicus (strain ATCC BAA-1280 / DSM 17508 / OCM 812 / Nankai-3) protein is Enolase.